Here is a 465-residue protein sequence, read N- to C-terminus: Paired box protein Pax-8 (465 aa).

The paired DNA-binding region spans 26–152 (GHGGLNQLGG…SSINRIIRTK (127 aa)). Residues 29–85 (GLNQLGGAFVNGRPLPEVVRQRIVDLAHQGVRPCDISRQLRVSHGCVSKILGRYYET) are PAI subdomain. The tract at residues 104–152 (KVVEKIGDYKRQNPTMFAWEIRDRLLTDGVCDNDTVPSVSSINRIIRTK) is RED subdomain. The interval 206–227 (PSADGKRKLDDSDQESCRLSID) is disordered.

In terms of tissue distribution, expression starts at late gastrula stages in cells fated to become the primordia of the otic system and the pronephric kidney. Expression is maintained in these two structures through late tailbud stages. Does not appear to be expressed in the thyroid gland.

It localises to the nucleus. Probable transcription factor. Involved in kidney development, acting synergistically with lhx1/lim-1 to establish the pronephric primordium in late gastrulae/early neurulae. This is Paired box protein Pax-8 from Xenopus laevis (African clawed frog).